Consider the following 313-residue polypeptide: uncharacterized protein (313 aa).

A29 to D61 contacts NADP(+).

It belongs to the short-chain dehydrogenases/reductases (SDR) family. 2,4-dienoyl-CoA reductase subfamily.

This is an uncharacterized protein from Caenorhabditis elegans.